Here is a 330-residue protein sequence, read N- to C-terminus: Pyridoxal 5'-phosphate synthase subunit PdxS (330 aa).

D23 lines the D-ribose 5-phosphate pocket. K80 functions as the Schiff-base intermediate with D-ribose 5-phosphate in the catalytic mechanism. Position 152 (G152) interacts with D-ribose 5-phosphate. R164 is a binding site for D-glyceraldehyde 3-phosphate. Residues G250 and 271–272 each bind D-ribose 5-phosphate; that span reads GS.

It belongs to the PdxS/SNZ family. In terms of assembly, in the presence of PdxT, forms a dodecamer of heterodimers.

The catalysed reaction is aldehydo-D-ribose 5-phosphate + D-glyceraldehyde 3-phosphate + L-glutamine = pyridoxal 5'-phosphate + L-glutamate + phosphate + 3 H2O + H(+). It functions in the pathway cofactor biosynthesis; pyridoxal 5'-phosphate biosynthesis. Catalyzes the formation of pyridoxal 5'-phosphate from ribose 5-phosphate (RBP), glyceraldehyde 3-phosphate (G3P) and ammonia. The ammonia is provided by the PdxT subunit. Can also use ribulose 5-phosphate and dihydroxyacetone phosphate as substrates, resulting from enzyme-catalyzed isomerization of RBP and G3P, respectively. The polypeptide is Pyridoxal 5'-phosphate synthase subunit PdxS (Methanocaldococcus jannaschii (strain ATCC 43067 / DSM 2661 / JAL-1 / JCM 10045 / NBRC 100440) (Methanococcus jannaschii)).